Here is a 129-residue protein sequence, read N- to C-terminus: MDKLHLEIVTPQGQIFNDDVSSVVLPGSEGEFGVLPNHASLISLLKAGIIDIEDKHKKHDVVAINWGYAKIDEGKVVILADGAVYVSGNSESELANSLEAARNLIESMSSDTNAFAATISKMENVVRAR.

It belongs to the ATPase epsilon chain family. F-type ATPases have 2 components, CF(1) - the catalytic core - and CF(0) - the membrane proton channel. CF(1) has five subunits: alpha(3), beta(3), gamma(1), delta(1), epsilon(1). CF(0) has three main subunits: a, b and c.

Its subcellular location is the cell inner membrane. Functionally, produces ATP from ADP in the presence of a proton gradient across the membrane. The chain is ATP synthase epsilon chain from Campylobacter concisus (strain 13826).